Consider the following 342-residue polypeptide: Ketol-acid reductoisomerase (NADP(+)) (342 aa).

One can recognise a KARI N-terminal Rossmann domain in the interval alanine 2–threonine 182. NADP(+) is bound by residues tyrosine 25–glutamine 28, arginine 48, serine 51, serine 53, and aspartate 83–glutamine 86. Residue histidine 108 is part of the active site. Glycine 134 is a binding site for NADP(+). In terms of domain architecture, KARI C-terminal knotted spans serine 183–leucine 328. Mg(2+) is bound by residues aspartate 191, glutamate 195, glutamate 227, and glutamate 231. Serine 252 lines the substrate pocket.

Belongs to the ketol-acid reductoisomerase family. Requires Mg(2+) as cofactor.

The catalysed reaction is (2R)-2,3-dihydroxy-3-methylbutanoate + NADP(+) = (2S)-2-acetolactate + NADPH + H(+). It catalyses the reaction (2R,3R)-2,3-dihydroxy-3-methylpentanoate + NADP(+) = (S)-2-ethyl-2-hydroxy-3-oxobutanoate + NADPH + H(+). Its pathway is amino-acid biosynthesis; L-isoleucine biosynthesis; L-isoleucine from 2-oxobutanoate: step 2/4. The protein operates within amino-acid biosynthesis; L-valine biosynthesis; L-valine from pyruvate: step 2/4. In terms of biological role, involved in the biosynthesis of branched-chain amino acids (BCAA). Catalyzes an alkyl-migration followed by a ketol-acid reduction of (S)-2-acetolactate (S2AL) to yield (R)-2,3-dihydroxy-isovalerate. In the isomerase reaction, S2AL is rearranged via a Mg-dependent methyl migration to produce 3-hydroxy-3-methyl-2-ketobutyrate (HMKB). In the reductase reaction, this 2-ketoacid undergoes a metal-dependent reduction by NADPH to yield (R)-2,3-dihydroxy-isovalerate. In Cutibacterium acnes (strain DSM 16379 / KPA171202) (Propionibacterium acnes), this protein is Ketol-acid reductoisomerase (NADP(+)).